Consider the following 135-residue polypeptide: Large ribosomal subunit protein uL18 (135 aa).

The tract at residues 1–23 (MSQTANQKAKRIPLGKDASTKRR) is disordered.

The protein belongs to the universal ribosomal protein uL18 family. In terms of assembly, part of the 50S ribosomal subunit; part of the 5S rRNA/L5/L18/L25 subcomplex. Contacts the 5S and 23S rRNAs.

In terms of biological role, this is one of the proteins that bind and probably mediate the attachment of the 5S RNA into the large ribosomal subunit, where it forms part of the central protuberance. This is Large ribosomal subunit protein uL18 from Rhodococcus jostii (strain RHA1).